We begin with the raw amino-acid sequence, 363 residues long: Aminomethyltransferase (363 aa).

This sequence belongs to the GcvT family. The glycine cleavage system is composed of four proteins: P, T, L and H.

The catalysed reaction is N(6)-[(R)-S(8)-aminomethyldihydrolipoyl]-L-lysyl-[protein] + (6S)-5,6,7,8-tetrahydrofolate = N(6)-[(R)-dihydrolipoyl]-L-lysyl-[protein] + (6R)-5,10-methylene-5,6,7,8-tetrahydrofolate + NH4(+). Functionally, the glycine cleavage system catalyzes the degradation of glycine. The polypeptide is Aminomethyltransferase (Staphylococcus haemolyticus (strain JCSC1435)).